The chain runs to 500 residues: NF-kappa-B inhibitor epsilon (500 aa).

Positions 1 to 10 (MNQRRSESRP) are enriched in basic and acidic residues. 3 disordered regions span residues 1–66 (MNQR…PAWA), 84–215 (LSSL…YGSS), and 222–241 (SLLG…LPHV). Phosphoserine is present on residues serine 157, serine 161, and serine 183. Low complexity predominate over residues 161–186 (SLRSLRSLPESTSAPASGPSDGSPQP). Residues 196–209 (EPQEKEDADGERAD) show a composition bias toward basic and acidic residues. ANK repeat units lie at residues 258–291 (DGDT…DIQN), 293–322 (LYQT…SRAL), 326–355 (HGDT…EPGR), 369–398 (QGLA…DIDV), 403–432 (SGKT…QVDA), and 436–465 (NGCT…DSLL).

This sequence belongs to the NF-kappa-B inhibitor family. Interacts with RELA, REL, NFKB1 nuclear factor NF-kappa-B p50 subunit and NFKB2 nuclear factor NF-kappa-B p52 subunit. Interacts with HNRNPA2B1; the interaction may be mediated by the RRM2 domain of HNRNPA2B1, and HNRNPA2B1 may interact simultaneously with FAM76B and either NFKBIA or NFKBIE to form a complex. Serine phosphorylated; followed by proteasome-dependent degradation. In terms of tissue distribution, highly expressed in spleen, testis and lung, followed by kidney, pancreas, heart, placenta and brain. Also expressed in granulocytes and macrophages.

The protein localises to the cytoplasm. Its function is as follows. Sequesters NF-kappa-B transcription factor complexes in the cytoplasm, thereby inhibiting their activity. Sequestered complexes include NFKB1-RELA (p50-p65) and NFKB1-REL (p50-c-Rel) complexes. Limits B-cell activation in response to pathogens, and also plays an important role in B-cell development. This is NF-kappa-B inhibitor epsilon (NFKBIE) from Homo sapiens (Human).